Reading from the N-terminus, the 493-residue chain is Alpha-amylase-related protein (493 aa).

The signal sequence occupies residues 1-19 (MFKLALTLTLCLAGSLSLA). Gln20 bears the Pyrrolidone carboxylic acid mark. A disulfide bond links Cys47 and Cys103. Residues Asn117, Gln168, and Asp177 each coordinate Ca(2+). The cysteines at positions 156 and 170 are disulfide-linked. Position 205 (Arg205) interacts with chloride. The active-site Nucleophile is the Asp207. His211 serves as a coordination point for Ca(2+). The Proton donor role is filled by Glu244. Chloride is bound by residues Asn307 and Arg342. Intrachain disulfides connect Cys375/Cys381, Cys417/Cys440, and Cys447/Cys459.

It belongs to the glycosyl hydrolase 13 family. As to quaternary structure, monomer. The cofactor is Ca(2+). Requires chloride as cofactor.

The protein localises to the secreted. The enzyme catalyses Endohydrolysis of (1-&gt;4)-alpha-D-glucosidic linkages in polysaccharides containing three or more (1-&gt;4)-alpha-linked D-glucose units.. In Drosophila teissieri (Fruit fly), this protein is Alpha-amylase-related protein (Amyrel).